A 743-amino-acid polypeptide reads, in one-letter code: MGRDVLNFNVDWLYIPEDLNDAYKFDFDESNFEVVSLPHANKTFPHHYFKEEDYRFVSWYRKHFKVDERYKGKKVYIHFEGVITVAKVYVNGEFVGEHKGGYTPFEFDITEYIKYGNFENLIAVQVDSREHKDIPPEGHLVDYMLFGGIYRNVWLKILNDTHIKDVYFVVDKLQDSVAEISITTTIAGKEISNGKILTEVINKEGVVCSSVVTDIKEMQKEIVQQIKMDNPLTWHPDHPYLYNVSVKLIAENEILDNYTFKTGIRTVEFRDDGKFYINGEPLKLRGLNRHQTFPYVGGAMPDRVQRKDADILKYELGLNYVRTSHYPQAVSFLDRCDEIGLLVFEEIPGWQHIGDENWKNIAKENLKEMILRDRNHPCIFMWGVRINESLDDHDFYKEMNEIAHKLDRSRPTGGVRYLRDSEKLEDVFTYNDFIYNLEGKIQLPNHKKYMVTEYMGHMYPTKSYDNLNRLITHARLHALIQDKQYGIPNMAGASGWCAFDYNTTSAFGSGDNICYHGVCDIFRLPKFAAHFYRSQADPHLYGPYVFIASYLIPSFEEENGDKLLVFSNCEEVELYINDKFVKRQMPNRVDFPSLPHPPFEFSMKECGINYMEVRVNNASITAIGLIDGKEVARHTLRPYGKPHKLILSCDDNEIMADGADCTRVVVSVVDENGSILPYANIPVSFEIEGEGKLIGENPLTLEAGRGAVYVKSTRKPGEIILKAKSHYVAEESNVSIKTKSIGY.

E388 serves as the catalytic Proton donor. The Nucleophile role is filled by E453.

This sequence belongs to the glycosyl hydrolase 2 family. Homodimer.

The enzyme catalyses Hydrolysis of terminal non-reducing beta-D-galactose residues in beta-D-galactosides.. In terms of biological role, beta-galactosidase. This is Beta-galactosidase (lacZ) from Thermoanaerobacter pseudethanolicus (strain ATCC 33223 / 39E) (Clostridium thermohydrosulfuricum).